The following is a 289-amino-acid chain: Deoxyuridine 5'-triphosphate nucleotidohydrolase (289 aa).

Substrate-binding positions include 176–178 and 283–284; these read RSG and FG.

It belongs to the dUTPase family. Mg(2+) is required as a cofactor.

The enzyme catalyses dUTP + H2O = dUMP + diphosphate + H(+). Involved in nucleotide metabolism: produces dUMP, the immediate precursor of thymidine nucleotides and decreases the intracellular concentration of dUTP to avoid uracil incorporation into viral DNA. The sequence is that of Deoxyuridine 5'-triphosphate nucleotidohydrolase from Equus caballus (Horse).